Consider the following 662-residue polypeptide: Retaining alpha-galactosidase (662 aa).

A signal peptide spans Met1–Ala19. Ca(2+) is bound at residue Glu174. Catalysis depends on Asp415, which acts as the Nucleophile. Ca(2+)-binding residues include Glu464 and Glu470. Residue Glu470 is the Proton donor/acceptor of the active site.

This sequence belongs to the glycosyl hydrolase 97 family. As to quaternary structure, monomer. Ca(2+) serves as cofactor.

It carries out the reaction Hydrolysis of terminal, non-reducing alpha-D-galactose residues in alpha-D-galactosides, including galactose oligosaccharides, galactomannans and galactolipids.. Inhibited by EDTA in vitro. Functionally, galactosidase that is able to hydrolyze the alpha-1,6 disaccharide melibiose and the synthetic p-nitrophenyl alpha-galactoside substrate (pNP-Gal), with retention of the anomeric configuration. Does not hydrolyze DNP-Glc or pNP-Glc. This Bacteroides thetaiotaomicron (strain ATCC 29148 / DSM 2079 / JCM 5827 / CCUG 10774 / NCTC 10582 / VPI-5482 / E50) protein is Retaining alpha-galactosidase.